We begin with the raw amino-acid sequence, 175 residues long: Peptide deformylase (175 aa).

Cys-94 and His-136 together coordinate Fe cation. The active site involves Glu-137. Position 140 (His-140) interacts with Fe cation.

The protein belongs to the polypeptide deformylase family. Fe(2+) serves as cofactor.

It catalyses the reaction N-terminal N-formyl-L-methionyl-[peptide] + H2O = N-terminal L-methionyl-[peptide] + formate. Functionally, removes the formyl group from the N-terminal Met of newly synthesized proteins. Requires at least a dipeptide for an efficient rate of reaction. N-terminal L-methionine is a prerequisite for activity but the enzyme has broad specificity at other positions. This is Peptide deformylase from Brucella suis biovar 1 (strain 1330).